The chain runs to 129 residues: Biogenesis of lysosome-related organelles complex 1 subunit CNL1 (129 aa).

This sequence belongs to the BLOC1S4 family. Component of the biogenesis of lysosome-related organelles complex-1 (BLOC-1).

Its subcellular location is the cytoplasm. Functionally, component of the biogenesis of lysosome-related organelles complex-1 (BLOC-1), a complex that is involved in endosomal cargo sorting. This Eremothecium gossypii (strain ATCC 10895 / CBS 109.51 / FGSC 9923 / NRRL Y-1056) (Yeast) protein is Biogenesis of lysosome-related organelles complex 1 subunit CNL1 (CLN1).